The following is a 527-amino-acid chain: UDP-glucuronosyltransferase 2A3 (527 aa).

The signal sequence occupies residues 1 to 23 (MRSDKSALVFLLLQLFCVGCGFC). The Extracellular segment spans residues 24-491 (GKVLVWPCDM…TWFQHYSIDV (468 aa)). Residue Asn313 is glycosylated (N-linked (GlcNAc...) asparagine). The chain crosses the membrane as a helical span at residues 492-512 (IGFLLACVATAIFLFTKCFLF). The Cytoplasmic segment spans residues 513–527 (SCQKFNKTRKIEKRE).

The protein belongs to the UDP-glycosyltransferase family.

The protein resides in the membrane. The enzyme catalyses glucuronate acceptor + UDP-alpha-D-glucuronate = acceptor beta-D-glucuronoside + UDP + H(+). Functionally, UDP-glucuronosyltransferases catalyze phase II biotransformation reactions in which lipophilic substrates are conjugated with glucuronic acid to increase water solubility and enhance excretion. They are of major importance in the conjugation and subsequent elimination of potentially toxic xenobiotics and endogenous compounds. The polypeptide is UDP-glucuronosyltransferase 2A3 (UGT2A3) (Homo sapiens (Human)).